Here is a 293-residue protein sequence, read N- to C-terminus: Pyridoxal 5'-phosphate synthase subunit PdxS (293 aa).

Position 23 (Asp-23) interacts with D-ribose 5-phosphate. Residue Lys-80 is the Schiff-base intermediate with D-ribose 5-phosphate of the active site. D-ribose 5-phosphate is bound at residue Gly-152. Arg-164 is a binding site for D-glyceraldehyde 3-phosphate. D-ribose 5-phosphate is bound by residues Gly-213 and 234–235 (GS).

Belongs to the PdxS/SNZ family. In the presence of PdxT, forms a dodecamer of heterodimers.

It carries out the reaction aldehydo-D-ribose 5-phosphate + D-glyceraldehyde 3-phosphate + L-glutamine = pyridoxal 5'-phosphate + L-glutamate + phosphate + 3 H2O + H(+). It participates in cofactor biosynthesis; pyridoxal 5'-phosphate biosynthesis. Its function is as follows. Catalyzes the formation of pyridoxal 5'-phosphate from ribose 5-phosphate (RBP), glyceraldehyde 3-phosphate (G3P) and ammonia. The ammonia is provided by the PdxT subunit. Can also use ribulose 5-phosphate and dihydroxyacetone phosphate as substrates, resulting from enzyme-catalyzed isomerization of RBP and G3P, respectively. The protein is Pyridoxal 5'-phosphate synthase subunit PdxS of Dehalococcoides mccartyi (strain ATCC BAA-2100 / JCM 16839 / KCTC 5957 / BAV1).